A 144-amino-acid polypeptide reads, in one-letter code: Eukaryotic translation initiation factor 1A, Y-chromosomal (144 aa).

Positions 1–15 (MPKNKGKGGKNRRRG) are enriched in basic residues. Residues 1–26 (MPKNKGKGGKNRRRGKNENESEKREL) form a disordered region. Positions 16–26 (KNENESEKREL) are enriched in basic and acidic residues. The region spanning 22–96 (EKRELVFKED…NKADVILKYN (75 aa)) is the S1-like domain. A Glycyl lysine isopeptide (Lys-Gly) (interchain with G-Cter in ubiquitin) cross-link involves residue Lys-88. The disordered stretch occupies residues 114–144 (KINETDTFGPGDDDEIQFDDIGDDDEDIDDI). A compositionally biased stretch (acidic residues) spans 124 to 144 (GDDDEIQFDDIGDDDEDIDDI).

This sequence belongs to the eIF-1A family. In terms of assembly, component of the 43S pre-initiation complex (43S PIC), which is composed of the 40S ribosomal subunit, EIF1, eIF1A (EIF1AX), eIF3 complex, EIF5 and eIF2-GTP-initiator tRNA complex (eIF2 ternary complex). Interacts with EIF5; this interaction contributes to the maintenance of EIF1 within the open 43S PIC. Interacts through its C-terminal domain (CTD) with the CTD of EIF5B; from the location of the start codon by the 43S complex until the formation of the 80S complex. Ubiquitous.

It is found in the cytoplasm. Its function is as follows. Component of the 43S pre-initiation complex (43S PIC), which binds to the mRNA cap-proximal region, scans mRNA 5'-untranslated region, and locates the initiation codon. This protein enhances formation of the cap-proximal complex. Together with EIF1, facilitates scanning, start codon recognition, promotion of the assembly of 48S complex at the initiation codon (43S PIC becomes 48S PIC after the start codon is reached), and dissociation of aberrant complexes. After start codon location, together with EIF5B orients the initiator methionine-tRNA in a conformation that allows 60S ribosomal subunit joining to form the 80S initiation complex. Is released after 80S initiation complex formation, just after GTP hydrolysis by EIF5B, and before release of EIF5B. Its globular part is located in the A site of the 40S ribosomal subunit. Its interaction with EIF5 during scanning contribute to the maintenance of EIF1 within the open 43S PIC. In contrast to yeast orthologs, does not bind EIF1. This chain is Eukaryotic translation initiation factor 1A, Y-chromosomal (EIF1AY), found in Homo sapiens (Human).